A 278-amino-acid polypeptide reads, in one-letter code: Probable endonuclease 4 (278 aa).

9 residues coordinate Zn(2+): His69, His109, Glu145, Asp179, His182, His214, Asp227, His229, and Glu259.

Belongs to the AP endonuclease 2 family. The cofactor is Zn(2+).

It carries out the reaction Endonucleolytic cleavage to 5'-phosphooligonucleotide end-products.. Its function is as follows. Endonuclease IV plays a role in DNA repair. It cleaves phosphodiester bonds at apurinic or apyrimidinic (AP) sites, generating a 3'-hydroxyl group and a 5'-terminal sugar phosphate. This is Probable endonuclease 4 from Phocaeicola vulgatus (strain ATCC 8482 / DSM 1447 / JCM 5826 / CCUG 4940 / NBRC 14291 / NCTC 11154) (Bacteroides vulgatus).